The following is a 75-amino-acid chain: Xibalbin-13 2 (75 aa).

An N-terminal signal peptide occupies residues Met-1–Ala-27. A propeptide spanning residues Glu-28–Asp-30 is cleaved from the precursor. 4 disulfides stabilise this stretch: Cys-34–Cys-49, Cys-41–Cys-54, Cys-48–Cys-65, and Cys-56–Cys-63.

This sequence belongs to the xibalbin-13 family. In terms of tissue distribution, expressed by the venom gland and the whole body.

The protein resides in the secreted. Probable neurotoxin. Strongly inhibits voltage-gated potassium channels (Kv1.1/KCNA1, Kv1.2/KCNA2, Kv1.3/KCNA3, and Kv1.6/KCNA6, with the highest toxicity against Kv1.1 (85.1% inhibition at 1 uM)) and mildly inhibits sodium channels (Nav1.2/SCN2A, Nav1.4/SCN4A, Nav1.5/SCN5A, Nav1.6/SCN8A, and BgNav). Induces activation of protein kinase A type II (PKA-II) and MAP kinase Erk1/2 in primary nociceptive and non-nociceptive sensory neurons. Does not show cytotoxic activity. Does not have an impact on Ca2+, cAMP, and NO signaling in the cell types analyzed. Does not interfere with the adhesion of leukocytes to endothelial cells. This is Xibalbin-13 2 from Xibalbanus tulumensis (Blind cave remipede).